The primary structure comprises 89 residues: Small ribosomal subunit protein uS14 (89 aa).

Belongs to the universal ribosomal protein uS14 family. Part of the 30S ribosomal subunit. Contacts proteins S3 and S10.

Binds 16S rRNA, required for the assembly of 30S particles and may also be responsible for determining the conformation of the 16S rRNA at the A site. In Pelodictyon phaeoclathratiforme (strain DSM 5477 / BU-1), this protein is Small ribosomal subunit protein uS14.